A 503-amino-acid polypeptide reads, in one-letter code: Probable cytosol aminopeptidase (503 aa).

Residues lysine 270 and aspartate 275 each contribute to the Mn(2+) site. Lysine 282 is an active-site residue. The Mn(2+) site is built by aspartate 293, aspartate 352, and glutamate 354. Arginine 356 is an active-site residue.

The protein belongs to the peptidase M17 family. Requires Mn(2+) as cofactor.

It is found in the cytoplasm. It carries out the reaction Release of an N-terminal amino acid, Xaa-|-Yaa-, in which Xaa is preferably Leu, but may be other amino acids including Pro although not Arg or Lys, and Yaa may be Pro. Amino acid amides and methyl esters are also readily hydrolyzed, but rates on arylamides are exceedingly low.. The enzyme catalyses Release of an N-terminal amino acid, preferentially leucine, but not glutamic or aspartic acids.. Functionally, presumably involved in the processing and regular turnover of intracellular proteins. Catalyzes the removal of unsubstituted N-terminal amino acids from various peptides. The protein is Probable cytosol aminopeptidase of Sodalis glossinidius (strain morsitans).